The primary structure comprises 113 residues: UPF0212 protein AF_0282 (113 aa).

It belongs to the UPF0212 family.

This is UPF0212 protein AF_0282 from Archaeoglobus fulgidus (strain ATCC 49558 / DSM 4304 / JCM 9628 / NBRC 100126 / VC-16).